The primary structure comprises 103 residues: Large ribosomal subunit protein bL21 (103 aa).

Belongs to the bacterial ribosomal protein bL21 family. As to quaternary structure, part of the 50S ribosomal subunit. Contacts protein L20.

This protein binds to 23S rRNA in the presence of protein L20. The polypeptide is Large ribosomal subunit protein bL21 (Paracidovorax citrulli (strain AAC00-1) (Acidovorax citrulli)).